We begin with the raw amino-acid sequence, 604 residues long: Prostaglandin G/H synthase 2 (604 aa).

The N-terminal stretch at 1 to 17 is a signal peptide; that stretch reads MLARAGLLCASLSPPHA. An EGF-like domain is found at 18 to 55; that stretch reads ANPCCSNPCQNQGVCMSIGFDQYMCDCSRTGFYGENCS. Cystine bridges form between Cys-21–Cys-32, Cys-22–Cys-145, Cys-26–Cys-42, and Cys-44–Cys-54. A glycan (N-linked (GlcNAc...) asparagine) is linked at Asn-53. Arg-106 is a binding site for substrate. N-linked (GlcNAc...) asparagine glycosylation occurs at Asn-130. His-193 serves as the catalytic Proton acceptor. Residue Tyr-341 coordinates substrate. Catalysis depends on Tyr-371, which acts as the For cyclooxygenase activity. His-374 is a binding site for heme b. The N-linked (GlcNAc...) asparagine glycan is linked to Asn-396. At Cys-526 the chain carries S-nitrosocysteine. Cys-555 and Cys-561 are joined by a disulfide. Asn-580 carries an N-linked (GlcNAc...) asparagine glycan.

Belongs to the prostaglandin G/H synthase family. In terms of assembly, homodimer. It depends on heme b as a cofactor. S-nitrosylation by NOS2 (iNOS) activates enzyme activity. S-nitrosylation may take place on different Cys residues in addition to Cys-526.

The protein localises to the microsome membrane. It is found in the endoplasmic reticulum membrane. Its subcellular location is the nucleus inner membrane. It localises to the nucleus outer membrane. The catalysed reaction is (5Z,8Z,11Z,14Z)-eicosatetraenoate + AH2 + 2 O2 = prostaglandin H2 + A + H2O. The enzyme catalyses (5Z,8Z,11Z,14Z)-eicosatetraenoate + 2 O2 = prostaglandin G2. It carries out the reaction prostaglandin G2 + AH2 = prostaglandin H2 + A + H2O. It catalyses the reaction (5Z,8Z,11Z,14Z,17Z)-eicosapentaenoate + 2 O2 = prostaglandin G3. The catalysed reaction is prostaglandin G3 + AH2 = prostaglandin H3 + A + H2O. The enzyme catalyses (8Z,11Z,14Z)-eicosatrienoate + 2 O2 = prostaglandin G1. It carries out the reaction prostaglandin G1 + AH2 = prostaglandin H1 + A + H2O. It catalyses the reaction 2-(5Z,8Z,11Z,14Z)-eicosatetraenoyl-sn-glycero-3-phosphoethanolamine + 2 O2 = 2-(prostaglandin G2)-sn-glycero-3-phosphoethanolamine. The catalysed reaction is 2-(prostaglandin G2)-sn-glycero-3-phosphoethanolamine + AH2 = 2-(prostaglandin H2)-sn-glycero-3-phosphoethanolamine + A + H2O. The enzyme catalyses 2-(5Z,8Z,11Z,14Z)-eicosatetraenoyl-sn-glycero-3-phosphocholine + 2 O2 = 2-(prostaglandin G2)-sn-glycero-3-phosphocholine. It carries out the reaction 2-(prostaglandin G2)-sn-glycero-3-phosphocholine + AH2 = 2-(prostaglandin H2)-sn-glycero-3-phosphocholine + A + H2O. It catalyses the reaction (15S)-hydroperoxy-(5Z,8Z,11Z,13E)-eicosatetraenoate + AH2 = (15S)-hydroxy-(5Z,8Z,11Z,13E)-eicosatetraenoate + A + H2O. The catalysed reaction is 2-(5Z,8Z,11Z,14Z)-eicosatetraenoyl-sn-glycero-3-phosphocholine + AH2 + O2 = 2-[(15S)-hydroxy-(5Z,8Z,11Z,13E)-eicosatetraenoyl]-sn-glycero-3-phosphocholine + A + H2O. The enzyme catalyses 2-(5Z,8Z,11Z,14Z)-eicosatetraenoyl-sn-glycero-3-phosphocholine + AH2 + O2 = 2-[(15R)-hydroxy-(5Z,8Z,11Z,13E)-eicosatetraenoyl]-sn-glycero-3-phosphocholine + A + H2O. It carries out the reaction 2-(5Z,8Z,11Z,14Z)-eicosatetraenoyl-sn-glycero-3-phosphocholine + AH2 + O2 = 2-[(11R)-hydroxy-(5Z,8Z,12E,14Z)-eicosatetraenoyl]-sn-glycero-3-phosphocholine + A + H2O. It catalyses the reaction (9Z,12Z)-octadecadienoate + AH2 + O2 = 9-hydroxy-(10E,12Z)-octadecadienoate + A + H2O. The catalysed reaction is (9Z,12Z)-octadecadienoate + AH2 + O2 = 13-hydroxy-(9Z,11E)-octadecadienoate + A + H2O. The enzyme catalyses (5Z,8Z,11Z,14Z)-eicosatetraenoate + AH2 + O2 = (15R)-hydroxy-(5Z,8Z,11Z,13E)-eicosatetraenoate + A + H2O. It carries out the reaction (5Z,8Z,11Z,14Z)-eicosatetraenoate + AH2 + O2 = (11R)-hydroxy-(5Z,8Z,12E,14Z)-eicosatetraenoate + A + H2O. It catalyses the reaction (5Z,8Z,11Z,14Z,17Z)-eicosapentaenoate + AH2 + O2 = (11R)-hydroxy-(5Z,8Z,12E,14Z,17Z)-eicosapentaenoate + A + H2O. The catalysed reaction is (5Z,8Z,11Z,14Z,17Z)-eicosapentaenoate + AH2 + O2 = (18S)-hydroxy-(5Z,8Z,11Z,14Z,16E)-eicosapentaenoate + A + H2O. The enzyme catalyses (5Z,8Z,11Z,14Z,17Z)-eicosapentaenoate + AH2 + O2 = (18R)-hydroxy-(5Z,8Z,11Z,14Z,16E)-eicosapentaenoate + A + H2O. It carries out the reaction (5Z,8Z,11Z,14Z,17Z)-eicosapentaenoate + AH2 + O2 = (15R)-hydroxy-(5Z,8Z,11Z,13E,17Z)-eicosapentaenoate + A + H2O. It catalyses the reaction (5Z,8Z,11Z,14Z,17Z)-eicosapentaenoate + AH2 + O2 = (15S)-hydroxy-(5Z,8Z,11Z,13E,17Z)-eicosapentaenoate + A + H2O. The catalysed reaction is (7Z,10Z,13Z,16Z,19Z)-docosapentaenoate + AH2 + O2 = 13R-hydroxy-(7Z,10Z,14E,16Z,19Z)-docosapentaenoate + A + H2O. The enzyme catalyses (4Z,7Z,10Z,13Z,16Z,19Z)-docosahexaenoate + AH2 + O2 = 13-hydroxy-(4Z,7Z,10Z,14E,16Z,19Z)-docosahexaenoate + A + H2O. It carries out the reaction (5S)-hydroxy-(6E,8Z,11Z,14Z)-eicosatetraenoate + AH2 + O2 = (5S,15R)-dihydroxy-(6E,8Z,11Z,13E)-eicosatetraenoate + A + H2O. It catalyses the reaction (4Z,7Z,10Z,13Z,16Z,19Z)-docosahexaenoate + AH2 + O2 = 17R-hydroxy-(4Z,7Z,10Z,13Z,15E,19Z)-docosahexaenoate + A + H2O. The catalysed reaction is (5S)-hydroxy-(6E,8Z,11Z,14Z)-eicosatetraenoate + AH2 + O2 = (5S,15S)-dihydroxy-(6E,8Z,11Z,13E)-eicosatetraenoate + A + H2O. The enzyme catalyses (5S)-hydroxy-(6E,8Z,11Z,14Z)-eicosatetraenoate + AH2 + O2 = (5S,11R)-dihydroxy-(6E,8Z,12E,14Z)-eicosatetraenoate + A + H2O. It carries out the reaction 2-(5Z,8Z,11Z,14Z-eicosatetraenoyl)-glycerol + 2 O2 = 2-glyceryl-prostaglandin G2. It catalyses the reaction 2-glyceryl-prostaglandin G2 + AH2 = 2-glyceryl-prostaglandin H2 + A + H2O. The catalysed reaction is (5Z,8Z,11Z,14Z)-eicosatetraenoate + O2 = (15R)-hydroperoxy-(5Z,8Z,11Z,13E)-eicosatetraenoate. The enzyme catalyses (5Z,8Z,11Z,14Z)-eicosatetraenoate + O2 = 11R-hydroperoxy-(5Z,8Z,12E,14Z)-eicosatetraenoate. It carries out the reaction (9Z,12Z)-octadecadienoate + AH2 + O2 = (9R)-hydroxy-(10E,12Z)-octadecadienoate + A + H2O. It catalyses the reaction (9Z,12Z)-octadecadienoate + AH2 + O2 = (9S)-hydroxy-(10E,12Z)-octadecadienoate + A + H2O. The catalysed reaction is (9Z,12Z)-octadecadienoate + AH2 + O2 = (13S)-hydroxy-(9Z,11E)-octadecadienoate + A + H2O. The enzyme catalyses (9Z,12Z)-octadecadienoate + AH2 + O2 = (13R)-hydroxy-(9Z,11E)-octadecadienoate + A + H2O. It participates in lipid metabolism; prostaglandin biosynthesis. Functionally, dual cyclooxygenase and peroxidase in the biosynthesis pathway of prostanoids, a class of C20 oxylipins mainly derived from arachidonate ((5Z,8Z,11Z,14Z)-eicosatetraenoate, AA, C20:4(n-6)), with a particular role in the inflammatory response. The cyclooxygenase activity oxygenates AA to the hydroperoxy endoperoxide prostaglandin G2 (PGG2), and the peroxidase activity reduces PGG2 to the hydroxy endoperoxide prostaglandin H2 (PGH2), the precursor of all 2-series prostaglandins and thromboxanes. This complex transformation is initiated by abstraction of hydrogen at carbon 13 (with S-stereochemistry), followed by insertion of molecular O2 to form the endoperoxide bridge between carbon 9 and 11 that defines prostaglandins. The insertion of a second molecule of O2 (bis-oxygenase activity) yields a hydroperoxy group in PGG2 that is then reduced to PGH2 by two electrons. Similarly catalyzes successive cyclooxygenation and peroxidation of dihomo-gamma-linoleate (DGLA, C20:3(n-6)) and eicosapentaenoate (EPA, C20:5(n-3)) to corresponding PGH1 and PGH3, the precursors of 1- and 3-series prostaglandins. In an alternative pathway of prostanoid biosynthesis, converts 2-arachidonoyl lysophopholipids to prostanoid lysophopholipids, which are then hydrolyzed by intracellular phospholipases to release free prostanoids. Metabolizes 2-arachidonoyl glycerol yielding the glyceryl ester of PGH2, a process that can contribute to pain response. Generates lipid mediators from n-3 and n-6 polyunsaturated fatty acids (PUFAs) via a lipoxygenase-type mechanism. Oxygenates PUFAs to hydroperoxy compounds and then reduces them to corresponding alcohols. Plays a role in the generation of resolution phase interaction products (resolvins) during both sterile and infectious inflammation. Metabolizes docosahexaenoate (DHA, C22:6(n-3)) to 17R-HDHA, a precursor of the D-series resolvins (RvDs). As a component of the biosynthetic pathway of E-series resolvins (RvEs), converts eicosapentaenoate (EPA, C20:5(n-3)) primarily to 18S-HEPE that is further metabolized by ALOX5 and LTA4H to generate 18S-RvE1 and 18S-RvE2. In vascular endothelial cells, converts docosapentaenoate (DPA, C22:5(n-3)) to 13R-HDPA, a precursor for 13-series resolvins (RvTs) shown to activate macrophage phagocytosis during bacterial infection. In activated leukocytes, contributes to oxygenation of hydroxyeicosatetraenoates (HETE) to diHETES (5,15-diHETE and 5,11-diHETE). Can also use linoleate (LA, (9Z,12Z)-octadecadienoate, C18:2(n-6)) as substrate and produce hydroxyoctadecadienoates (HODEs) in a regio- and stereospecific manner, being (9R)-HODE ((9R)-hydroxy-(10E,12Z)-octadecadienoate) and (13S)-HODE ((13S)-hydroxy-(9Z,11E)-octadecadienoate) its major products. During neuroinflammation, plays a role in neuronal secretion of specialized preresolving mediators (SPMs) 15R-lipoxin A4 that regulates phagocytic microglia. The chain is Prostaglandin G/H synthase 2 (PTGS2) from Neovison vison (American mink).